The primary structure comprises 940 residues: Phosphoenolpyruvate carboxylase (940 aa).

Active-site residues include His138 and Lys603.

Belongs to the PEPCase type 1 family. The cofactor is Mg(2+).

It catalyses the reaction oxaloacetate + phosphate = phosphoenolpyruvate + hydrogencarbonate. Its function is as follows. Forms oxaloacetate, a four-carbon dicarboxylic acid source for the tricarboxylic acid cycle. The sequence is that of Phosphoenolpyruvate carboxylase from Streptococcus thermophilus (strain ATCC BAA-491 / LMD-9).